The chain runs to 328 residues: AA9 family lytic polysaccharide monooxygenase A (328 aa).

The first 21 residues, 1 to 21 (MPSTKVAALSAVLALASTVAG), serve as a signal peptide directing secretion. His22 serves as a coordination point for Cu(2+). Position 22 is a methylhistidine (His22). 2 disulfides stabilise this stretch: Cys77–Cys199 and Cys118–Cys122. A glycan (N-linked (GlcNAc...) asparagine) is linked at Asn80. His107 is a binding site for Cu(2+). Residues Asn121 and Asn159 are each glycosylated (N-linked (GlcNAc...) asparagine). O2-binding residues include His185 and Gln194. Tyr196 serves as a coordination point for Cu(2+). 2 O-linked (Man...) serine glycosylation sites follow: Ser235 and Ser237. O-linked (Man...) threonine glycosylation is found at Thr238 and Thr245.

It belongs to the polysaccharide monooxygenase AA9 family. Cu(2+) serves as cofactor. The catalytically essential N-terminal histidine His-22 is post-translationally modified by methylation to prevent protonation of the histidine side chain, and protect the critical active site of the enzyme from oxidative damage.

The protein localises to the secreted. It carries out the reaction [(1-&gt;4)-beta-D-glucosyl]n+m + reduced acceptor + O2 = 4-dehydro-beta-D-glucosyl-[(1-&gt;4)-beta-D-glucosyl]n-1 + [(1-&gt;4)-beta-D-glucosyl]m + acceptor + H2O.. In terms of biological role, lytic polysaccharide monooxygenase (LPMO) that depolymerizes crystalline and amorphous polysaccharides via the oxidation of scissile alpha- or beta-(1-4)-glycosidic bonds, yielding C1 and C4 oxidation products. Catalysis by LPMOs requires the reduction of the active-site copper from Cu(II) to Cu(I) by a reducing agent and H(2)O(2) or O(2) as a cosubstrate. Shows activity on cellulosic substrates (Avicel, carboxymethylcellulose) and xylan. This is AA9 family lytic polysaccharide monooxygenase A from Talaromyces verruculosus (Penicillium verruculosum).